The chain runs to 1169 residues: Polyamine-transporting ATPase 13A2 (1169 aa).

Over M1–P44 the chain is Cytoplasmic. The stretch at W45–F65 is an intramembrane region. Topologically, residues R66–Q225 are cytoplasmic. The chain crosses the membrane as a helical span at residues L226 to W246. The Lumenal segment spans residues L247–H250. Residues Y251 to Y271 traverse the membrane as a helical segment. At K272–K422 the chain is on the cytoplasmic side. Residues F423–Y443 form a helical membrane-spanning segment. Topologically, residues R444–D458 are lumenal. A helical membrane pass occupies residues L459–A479. Over Q480 to S919 the chain is Cytoplasmic. D508 serves as the catalytic 4-aspartylphosphate intermediate. The Mg(2+) site is built by D867 and D871. The chain crosses the membrane as a helical span at residues F920 to L940. At Y941–N946 the chain is on the lumenal side. Residues L947–M967 traverse the membrane as a helical segment. Residues S968–S993 are Cytoplasmic-facing. A helical transmembrane segment spans residues L994 to A1014. Residues Q1015 to T1037 lie on the Lumenal side of the membrane. Residue N1022 is glycosylated (N-linked (GlcNAc...) asparagine). Residues V1038–A1058 traverse the membrane as a helical segment. At P1059–P1069 the chain is on the cytoplasmic side. The helical transmembrane segment at F1070–L1090 threads the bilayer. At L1091–K1106 the chain is on the lumenal side. Residues L1107–L1127 form a helical membrane-spanning segment. Over D1128–R1169 the chain is Cytoplasmic.

It belongs to the cation transport ATPase (P-type) (TC 3.A.3) family. Type V subfamily. Interacts with MYCBP2; the interaction inhibits the ubiquitination of TSC2 by MYCBP2. Interacts with HDAC6; the interaction results in recruitment of HDAC6 to lysosomes to promote CTTN deacetylation. In terms of processing, autophosphorylated. Accumulates in an inactive autophosphorylated state and autophosphorylation is stimulated by phosphatidic acid and phosphatidylinositol 3,5-bisphosphate but not by Mn(2+) or Zn(2+). The presence of spermine results in a dose-dependent reduction in autophosphorylation.

The protein localises to the lysosome membrane. It localises to the late endosome membrane. It is found in the endosome. Its subcellular location is the multivesicular body membrane. The protein resides in the cytoplasmic vesicle. The protein localises to the autophagosome membrane. The enzyme catalyses spermidine(out) + ATP + H2O = spermidine(in) + ADP + phosphate + H(+). It catalyses the reaction spermine(out) + ATP + H2O = spermine(in) + ADP + phosphate + H(+). With respect to regulation, accumulates in an inactive autophosphorylated state. The presence of spermine results in a dose-dependent reduction in autophosphorylation. Functionally, ATPase which acts as a lysosomal polyamine exporter with high affinity for spermine. Also stimulates cellular uptake of polyamines and protects against polyamine toxicity. Plays a role in intracellular cation homeostasis and the maintenance of neuronal integrity. Contributes to cellular zinc homeostasis. Confers cellular protection against Mn(2+) and Zn(2+) toxicity and mitochondrial stress. Required for proper lysosomal and mitochondrial maintenance. Regulates the autophagy-lysosome pathway through the control of SYT11 expression at both transcriptional and post-translational levels. Facilitates recruitment of deacetylase HDAC6 to lysosomes to deacetylate CTTN, leading to actin polymerization, promotion of autophagosome-lysosome fusion and completion of autophagy. Promotes secretion of exosomes as well as secretion of SCNA via exosomes. Plays a role in lipid homeostasis. The sequence is that of Polyamine-transporting ATPase 13A2 from Mus musculus (Mouse).